The following is a 487-amino-acid chain: uncharacterized protein (487 aa).

3 consecutive transmembrane segments (helical) span residues 10 to 30 (AALM…AADA), 45 to 65 (VISP…AVAA), and 439 to 459 (APVV…DFTL).

The protein localises to the cell membrane. This is an uncharacterized protein from Mycobacterium tuberculosis (strain CDC 1551 / Oshkosh).